The chain runs to 209 residues: MEKSESTKIDVVETNKERKGKAPLLGKAPVVAAAVVHAKGGGAKRGIAIFDLILRIAAFASALGAAVAMATTEETLPFFTQFFQFEASYDDLPTFTFFVVAMAIVVAYLVLSVPFSIVCIVRPHAVVPRLLLIIFDTVIIALTTGAAGSSAAIVYLAHNGNQDANWLAICQQFGDFCQRVSGAVVAAFVTVVILIFLVVLSASALRRHH.

Residues 1–46 are Cytoplasmic-facing; sequence MEKSESTKIDVVETNKERKGKAPLLGKAPVVAAAVVHAKGGGAKRG. The chain crosses the membrane as a helical span at residues 47-67; that stretch reads IAIFDLILRIAAFASALGAAV. At 68–96 the chain is on the extracellular side; that stretch reads AMATTEETLPFFTQFFQFEASYDDLPTFT. The helical transmembrane segment at 97 to 117 threads the bilayer; sequence FFVVAMAIVVAYLVLSVPFSI. Residues 118 to 129 are Cytoplasmic-facing; the sequence is VCIVRPHAVVPR. A helical transmembrane segment spans residues 130-150; sequence LLLIIFDTVIIALTTGAAGSS. Over 151-179 the chain is Extracellular; that stretch reads AAIVYLAHNGNQDANWLAICQQFGDFCQR. Residues 180-200 traverse the membrane as a helical segment; sequence VSGAVVAAFVTVVILIFLVVL. Over 201-209 the chain is Cytoplasmic; the sequence is SASALRRHH.

The protein belongs to the Casparian strip membrane proteins (CASP) family. In terms of assembly, homodimer and heterodimers.

The protein localises to the cell membrane. Functionally, regulates membrane-cell wall junctions and localized cell wall deposition. Required for establishment of the Casparian strip membrane domain (CSD) and the subsequent formation of Casparian strips, a cell wall modification of the root endodermis that determines an apoplastic barrier between the intraorganismal apoplasm and the extraorganismal apoplasm and prevents lateral diffusion. In Nicotiana tabacum (Common tobacco), this protein is Casparian strip membrane protein 1.